Consider the following 1369-residue polypeptide: Serine/threonine-protein kinase SIK3 (1369 aa).

The segment at 26–55 (LLPPPAAGPPAAPAAVPPAAVPARPTAPAS) is disordered. Over residues 27-45 (LPPPAAGPPAAPAAVPPAA) the composition is skewed to pro residues. The span at 46–55 (VPARPTAPAS) shows a compositional bias: low complexity. A Protein kinase domain is found at 66–317 (YEIDRTIGKG…MEQICRHKWM (252 aa)). Threonine 71 is modified (phosphothreonine). Residues 72-80 (IGKGNFAVV) and lysine 95 contribute to the ATP site. The Proton acceptor role is filled by aspartate 188. Residue threonine 221 is modified to Phosphothreonine. Residues 344–384 (PLNDDVLLAMEDMGLDKERTLQSLRSDAYDHYSAIYSLLCD) enclose the UBA domain. Threonine 469 is subject to Phosphothreonine. Phosphoserine occurs at positions 551, 591, 592, 674, and 695. The interval 775 to 821 (IQPSSPPPNHPSNHLFRQPSNSPPPVSSAMITSHGATSPSQFQGLPS) is disordered. Over residues 803–818 (AMITSHGATSPSQFQG) the composition is skewed to polar residues. Serine 914 carries the post-translational modification Phosphoserine. The disordered stretch occupies residues 942–993 (LFSDQSRGSPSSYSPSTGVGFPPTQALKVPPLDQFPTFPPSAQQQPPHYTTS). Residues 944-957 (SDQSRGSPSSYSPS) show a composition bias toward low complexity. Over residues 981-993 (PSAQQQPPHYTTS) the composition is skewed to polar residues. Residue serine 1026 is modified to Phosphoserine. The residue at position 1034 (arginine 1034) is an Omega-N-methylarginine. Residues 1314-1338 (DEEDEECGVSLGHEHPGLGDGSQHL) are disordered.

It belongs to the protein kinase superfamily. CAMK Ser/Thr protein kinase family. SNF1 subfamily. Binds to and is activated by YWHAZ when phosphorylated on Thr-221. Interacts with 14-3-3 proteins. Interacts with HDAC4; this interaction leads to HDAC4 retention in the cytoplasm. Interacts with DEPTOR, MLST8/GbetaL, RICTOR and RPTOR. The cofactor is Mg(2+). Phosphorylated at Thr-221 by STK11/LKB1 in complex with STE20-related adapter-alpha (STRADA) pseudo kinase and CAB39. Expressed in hypertrophic chondrocytes in the growth plate.

The protein localises to the cytoplasm. It catalyses the reaction L-seryl-[protein] + ATP = O-phospho-L-seryl-[protein] + ADP + H(+). The enzyme catalyses L-threonyl-[protein] + ATP = O-phospho-L-threonyl-[protein] + ADP + H(+). Its activity is regulated as follows. Activated by phosphorylation on Thr-221. Positive regulator of mTOR signaling that functions by triggering the degradation of DEPTOR, an mTOR inhibitor. Required for chondrocyte hypertrophy during skeletogenesis. Negatively regulates cAMP signaling pathway possibly by acting on CRTC2/TORC2 and CRTC3/TORC3. Prevents HDAC4 translocation to the nucleus. This Mus musculus (Mouse) protein is Serine/threonine-protein kinase SIK3 (Sik3).